The chain runs to 59 residues: SPbeta prophage-derived uncharacterized protein YosB (59 aa).

The protein is SPbeta prophage-derived uncharacterized protein YosB (yosB) of Bacillus subtilis (strain 168).